The sequence spans 78 residues: Small ribosomal subunit protein bS16c (78 aa).

The protein belongs to the bacterial ribosomal protein bS16 family.

The protein resides in the plastid. Its subcellular location is the chloroplast. This Panax ginseng (Korean ginseng) protein is Small ribosomal subunit protein bS16c.